Here is a 3630-residue protein sequence, read N- to C-terminus: Trimeric autotransporter adhesin AtaA (3630 aa).

The first 23 residues, 1-23 (MNKIYKVIWNATLLAWVAVSELA), serve as a signal peptide directing secretion. A surface exposed passenger domain region spans residues 24-3487 (KGKTKSTTSK…TNQAVVNYLG (3464 aa)). Residues 108 to 315 (SIAIGENAQG…ASDAVTVAQL (208 aa)) form an N-terminal YadA-like head region. The N-terminal stalk stretch occupies residues 316 to 2904 (DKAYDDTNGR…GRAATEEQLK (2589 aa)). Residues 2905-3169 (AVITSNITEV…DSDAVNVAQL (265 aa)) are C-terminal YadA-like head. Positions 3170 to 3561 (KAVGNQVVTT…DVEKKANAGI (392 aa)) are C-terminal stalk. The tract at residues 3539-3574 (LDNAFRITNNRIDDVEKKANAGIAAAMALESAPYVP) is outer membrane translocation of the passenger domain. 4 beta stranded membrane passes run 3575–3585 (GKYTYAAGAAY), 3589–3599 (ENAVGVTLRKT), 3608–3614 (TGGVAAA), and 3618–3629 (DASVRIGISGVI). The translocator domain stretch occupies residues 3575-3630 (GKYTYAAGAAYHGGENAVGVTLRKTADNGRWSITGGVAAASQGDASVRIGISGVID).

Belongs to the autotransporter-2 (AT-2) (TC 1.B.40) family. In terms of assembly, homotrimer. Interacts with TpgA.

The protein resides in the cell surface. Its subcellular location is the cell outer membrane. Responsible for autoagglutination, and for adhesion to abiotic and biotic surfaces such as polystyrene (PS), type I collagen, polypropylene (PP), polyvinylchloride (PVC), glass and stainless steel (SS). Adhesion is much stronger than that mediated by Yersinia YadA in a comparative assay. Confers autoagglutination and binding to PS, type I collagen, PP, PVC, glass and SS upon expression in Acinetobacter baylyi strain ADP1. Involved in rapid, irreversible adherence to polyurethane. Forms an unusual biofilm. An extended, surface exposed fiber binds to quartz crystals, PS and glass. It can be removed by washing in distilled water. The polypeptide is Trimeric autotransporter adhesin AtaA (Acinetobacter sp. (strain Tol 5)).